The sequence spans 353 residues: Keratocan (353 aa).

The signal sequence occupies residues 1 to 21 (MMTLKVCPSLLLLFLVHSVWT). The region spanning 34 to 72 (EHWSHYTFECPQECFCPPSFPNALYCDNKGLKEIPAIPA) is the LRRNT domain. 2 disulfide bridges follow: C43-C49 and C47-C59. LRR repeat units follow at residues 73 to 94 (RIWY…PFVN), 97 to 118 (HLRW…SGVL), 123 to 143 (RLLY…PLPV), 144 to 165 (GLEQ…VFSN), 168 to 188 (NLTM…QSDT), 194 to 214 (SLMQ…SIPA), 215 to 236 (NTLQ…YFSA), and 239 to 259 (KVTF…PPNG). N94 is a glycosylation site (N-linked (GlcNAc...) (keratan sulfate) asparagine). The N-linked (GlcNAc...) asparagine glycan is linked to N168. N223 carries N-linked (GlcNAc...) (keratan sulfate) asparagine glycosylation. N-linked (GlcNAc...) (keratan sulfate) asparagine glycosylation is present at N261. LRR repeat units lie at residues 264 to 283 (SILD…PINA) and 284 to 305 (HLEH…QICP). N-linked (GlcNAc...) asparagine glycosylation is present at N299. C304 and C344 are joined by a disulfide.

It belongs to the small leucine-rich proteoglycan (SLRP) family. SLRP class II subfamily. In terms of tissue distribution, cornea.

The protein localises to the secreted. It is found in the extracellular space. It localises to the extracellular matrix. In terms of biological role, plays an important role in generating and maintaining a transparent matrix within the corneal stroma. The polypeptide is Keratocan (KERA) (Coturnix japonica (Japanese quail)).